We begin with the raw amino-acid sequence, 429 residues long: UPF0242 protein CT_616 (429 aa).

This sequence belongs to the UPF0242 family.

The protein is UPF0242 protein CT_616 of Chlamydia trachomatis serovar D (strain ATCC VR-885 / DSM 19411 / UW-3/Cx).